We begin with the raw amino-acid sequence, 419 residues long: Protein-lysine N-methyltransferase EFM2 (419 aa).

S-adenosyl-L-methionine-binding positions include W222, 261 to 263, D290, W318, and A340; that span reads GAG.

It belongs to the class I-like SAM-binding methyltransferase superfamily. METTL21 family.

It localises to the cytoplasm. Functionally, S-adenosyl-L-methionine-dependent protein-lysine N-methyltransferase that mono- and dimethylates elongation factor 2 (EFT1/EFT2) at 'Lys-613' and methylates elongation factor 3A (YEF3). This chain is Protein-lysine N-methyltransferase EFM2, found in Saccharomyces cerevisiae (strain ATCC 204508 / S288c) (Baker's yeast).